A 362-amino-acid chain; its full sequence is tRNA/tmRNA (uracil-C(5))-methyltransferase (362 aa).

S-adenosyl-L-methionine-binding residues include Gln-186, Tyr-214, Asn-219, Glu-235, and Asp-295. Cys-320 acts as the Nucleophile in catalysis. Glu-354 acts as the Proton acceptor in catalysis.

Belongs to the class I-like SAM-binding methyltransferase superfamily. RNA M5U methyltransferase family. TrmA subfamily.

It carries out the reaction uridine(54) in tRNA + S-adenosyl-L-methionine = 5-methyluridine(54) in tRNA + S-adenosyl-L-homocysteine + H(+). The enzyme catalyses uridine(341) in tmRNA + S-adenosyl-L-methionine = 5-methyluridine(341) in tmRNA + S-adenosyl-L-homocysteine + H(+). Functionally, dual-specificity methyltransferase that catalyzes the formation of 5-methyluridine at position 54 (m5U54) in all tRNAs, and that of position 341 (m5U341) in tmRNA (transfer-mRNA). The sequence is that of tRNA/tmRNA (uracil-C(5))-methyltransferase from Ectopseudomonas mendocina (strain ymp) (Pseudomonas mendocina).